A 164-amino-acid chain; its full sequence is FMN reductase (NADH) RutF (164 aa).

It belongs to the non-flavoprotein flavin reductase family. RutF subfamily.

It catalyses the reaction FMNH2 + NAD(+) = FMN + NADH + 2 H(+). Catalyzes the reduction of FMN to FMNH2 which is used to reduce pyrimidine by RutA via the Rut pathway. This chain is FMN reductase (NADH) RutF, found in Enterobacter cloacae subsp. cloacae (strain ATCC 13047 / DSM 30054 / NBRC 13535 / NCTC 10005 / WDCM 00083 / NCDC 279-56).